The chain runs to 576 residues: uncharacterized protein (576 aa).

The N-terminal stretch at 1–28 (MLRLNGLRVLLRTLAAIGALLTTASASA) is a signal peptide. The Acyl-ester intermediate role is filled by serine 185. 2 cysteine pairs are disulfide-bonded: cysteine 252-cysteine 269 and cysteine 278-cysteine 286. Ca(2+) is bound by residues aspartate 253, aspartate 256, aspartate 260, and valine 262. Residues aspartate 414 and histidine 464 each act as charge relay system in the active site. Cysteine 529 and cysteine 551 form a disulfide bridge.

This sequence belongs to the tannase family.

This is an uncharacterized protein from Xanthomonas campestris pv. campestris (strain ATCC 33913 / DSM 3586 / NCPPB 528 / LMG 568 / P 25).